The primary structure comprises 550 residues: Chaperonin GroEL (550 aa).

ATP is bound by residues 30 to 33 (TLGP), K51, 87 to 91 (DGTTT), G415, 479 to 481 (NAA), and D495.

Belongs to the chaperonin (HSP60) family. In terms of assembly, forms a cylinder of 14 subunits composed of two heptameric rings stacked back-to-back. Interacts with the co-chaperonin GroES.

Its subcellular location is the cytoplasm. The catalysed reaction is ATP + H2O + a folded polypeptide = ADP + phosphate + an unfolded polypeptide.. Together with its co-chaperonin GroES, plays an essential role in assisting protein folding. The GroEL-GroES system forms a nano-cage that allows encapsulation of the non-native substrate proteins and provides a physical environment optimized to promote and accelerate protein folding. This chain is Chaperonin GroEL, found in Burkholderia mallei (strain NCTC 10247).